The primary structure comprises 402 residues: uncharacterized protein (402 aa).

11 consecutive transmembrane segments (helical) span residues 12-32 (FWLI…ITSV), 48-68 (GAAG…SPLA), 80-100 (TLWL…TGYT), 101-121 (AALF…NVLL), 134-154 (GIMI…ASGV), 168-188 (QAFL…IPQL), 212-232 (WYVT…IAWF), 248-268 (WMVS…PVLA), 291-311 (GLLA…IGIG), 339-359 (MSQS…GYLF), and 367-387 (MPIV…QGAG).

This sequence belongs to the major facilitator superfamily. Cyanate porter (TC 2.A.1.17) family.

It localises to the cell membrane. This is an uncharacterized protein from Bacillus subtilis (strain 168).